The chain runs to 524 residues: Maturase K (524 aa).

It belongs to the intron maturase 2 family. MatK subfamily.

Its subcellular location is the plastid. The protein resides in the chloroplast. Functionally, usually encoded in the trnK tRNA gene intron. Probably assists in splicing its own and other chloroplast group II introns. This chain is Maturase K, found in Welwitschia mirabilis (Tree tumbo).